The sequence spans 309 residues: tRNA-cytidine(32) 2-sulfurtransferase (309 aa).

Residues 57-62 (SGGKDS) carry the PP-loop motif motif. [4Fe-4S] cluster-binding residues include C132, C135, and C223.

This sequence belongs to the TtcA family. Homodimer. The cofactor is Mg(2+). [4Fe-4S] cluster is required as a cofactor.

It is found in the cytoplasm. The catalysed reaction is cytidine(32) in tRNA + S-sulfanyl-L-cysteinyl-[cysteine desulfurase] + AH2 + ATP = 2-thiocytidine(32) in tRNA + L-cysteinyl-[cysteine desulfurase] + A + AMP + diphosphate + H(+). The protein operates within tRNA modification. In terms of biological role, catalyzes the ATP-dependent 2-thiolation of cytidine in position 32 of tRNA, to form 2-thiocytidine (s(2)C32). The sulfur atoms are provided by the cysteine/cysteine desulfurase (IscS) system. This is tRNA-cytidine(32) 2-sulfurtransferase from Variovorax paradoxus (strain S110).